Here is a 374-residue protein sequence, read N- to C-terminus: Beta sliding clamp (374 aa).

It belongs to the beta sliding clamp family. As to quaternary structure, forms a ring-shaped head-to-tail homodimer around DNA which binds and tethers DNA polymerases and other proteins to the DNA. The DNA replisome complex has a single clamp-loading complex (3 tau and 1 each of delta, delta', psi and chi subunits) which binds 3 Pol III cores (1 core on the leading strand and 2 on the lagging strand) each with a beta sliding clamp dimer. Additional proteins in the replisome are other copies of gamma, psi and chi, Ssb, DNA helicase and RNA primase.

Its subcellular location is the cytoplasm. Confers DNA tethering and processivity to DNA polymerases and other proteins. Acts as a clamp, forming a ring around DNA (a reaction catalyzed by the clamp-loading complex) which diffuses in an ATP-independent manner freely and bidirectionally along dsDNA. Initially characterized for its ability to contact the catalytic subunit of DNA polymerase III (Pol III), a complex, multichain enzyme responsible for most of the replicative synthesis in bacteria; Pol III exhibits 3'-5' exonuclease proofreading activity. The beta chain is required for initiation of replication as well as for processivity of DNA replication. In Helicobacter pylori (strain J99 / ATCC 700824) (Campylobacter pylori J99), this protein is Beta sliding clamp (dnaN).